The primary structure comprises 1643 residues: Neurexin-3 (1643 aa).

Positions 1–27 (MSSTLHSVFFTLKVSILLGSLLGLCLG) are cleaved as a signal peptide. The region spanning 28 to 202 (LEFMGLPNQW…GVQMDAEGPC (175 aa)) is the Laminin G-like 1 domain. Topologically, residues 28–1568 (LEFMGLPNQW…EVIRESSSTT (1541 aa)) are extracellular. N-linked (GlcNAc...) asparagine glycans are attached at residues N58 and N105. Residues 198–235 (AEGPCGERPCENGGICFLLDGHPTCDCSTTGYGGKLCS) form the EGF-like 1 domain. Disulfide bonds link C202-C213, C207-C222, and C224-C234. Laminin G-like domains follow at residues 258–440 (VATF…VFKC) and 447–639 (DPIN…KSSC). Ca(2+) is bound by residues D304, L321, and M374. 5 cysteine pairs are disulfide-bonded: C404-C440, C610-C639, C647-C658, C652-C667, and C669-C679. One can recognise an EGF-like 2 domain in the interval 643–680 (SAKQCDSYPCKNNAVCKDGWNRFICDCTGTGYWGRTCE). Laminin G-like domains follow at residues 685-857 (ILSY…IDYC) and 871-1046 (DPVT…ERGC). Ca(2+) contacts are provided by D732 and L749. N-linked (GlcNAc...) asparagine glycosylation occurs at N757. R807 is a Ca(2+) binding site. 4 cysteine pairs are disulfide-bonded: C1018–C1046, C1053–C1064, C1058–C1073, and C1075–C1085. The EGF-like 3 domain maps to 1049–1086 (PSTTCQEDSCANQGVCMQQWEGFTCDCSMTSYSGNQCN). In terms of domain architecture, Laminin G-like 6 spans 1090 to 1260 (ATYIFGKSGG…NPNIKINGSV (171 aa)). D1142 and I1159 together coordinate Ca(2+). The N-linked (GlcNAc...) asparagine glycan is linked to N1189. Residues I1211 and N1213 each contribute to the Ca(2+) site. N-linked (GlcNAc...) asparagine glycans are attached at residues N1257 and N1301. The tract at residues 1294–1318 (ATTTTRKNRSTASIQPTSDDLVSSA) is disordered. Over residues 1303-1318 (STASIQPTSDDLVSSA) the composition is skewed to polar residues. Residue S1317 is glycosylated (O-linked (Xyl...) (heparan sulfate) serine). The chain crosses the membrane as a helical span at residues 1569–1589 (GMVVGIVAAAALCILILLYAM). At 1590 to 1643 (YKYRNRDEGSYQVDETRNYISNSAQSNGTLMKEKQQSSKSGHKKQKNKDREYYV) the chain is on the cytoplasmic side. Residues 1611–1643 (NSAQSNGTLMKEKQQSSKSGHKKQKNKDREYYV) form a disordered region.

It belongs to the neurexin family. In terms of assembly, the laminin G-like domain 2 binds to NXPH1. Specific isoforms bind to alpha-dystroglycan. The cytoplasmic C-terminal region binds to CASK. Specific isoforms bind neuroligins NLGN1, NLGN2 and NLGN3. Interacts with CLSTN3. Post-translationally, O-glycosylated; contains heparan sulfate. Heparan sulfate attachment is required for synapse development by mediating interactions with neuroligins. Expressed in the blood vessel walls (at protein level). Highly expressed in brain, lung, and pancreas; a lower level of expression is detectable in heart, placenta, liver, and kidney, whereas no expression can be observed in skeletal muscle. Isoform 4a is heart-specific.

The protein resides in the presynaptic cell membrane. Neuronal cell surface protein that may be involved in cell recognition and cell adhesion. May mediate intracellular signaling. The protein is Neurexin-3 (NRXN3) of Homo sapiens (Human).